A 372-amino-acid chain; its full sequence is MWPFTSAPAGAKCRLVETLPENMDFRSDHLTTFECFNEIITLAKKYIYIASFCCNPLSTTRGALIFDKLKEASEKGIKIIVLLDERGKRNLGELQSHCPDINFITVNIDKKNNVGLLLGCFWVSDDERCYVGNASFTGGSIHTIKTLGVYSDYPPLATDLRRRFDTFKAFNSVKNSWLNLYSSACCLPVSTAYHIKNPIGGVFFTDSPEHLLGYSRDLDTDVVIDKLRSAKTSIDIEHLAIVPTTRVDGNSYYWPDIYNSIIEAAINRGVKIRLLVGNWDKNDVYSMATAESLDALCVQNDLSVKVFTIQNNTKLLIVDDEYVHITSANFDGTHYQNHGFVSFNSIDKQLVSEAKKIFERDWVSSHSKSLKI.

Positions 153–156 (YPPL) match the YPPL motif. 2 S-palmitoyl cysteine; by host lipidation sites follow: Cys-185 and Cys-186. A PLD phosphodiesterase domain is found at 307-334 (FTIQNNTKLLIVDDEYVHITSANFDGTH).

This sequence belongs to the orthopoxvirus OPG057 family. Interacts with protein OPG190. Post-translationally, palmitoylated. Attachment of the palmitate moiety is essential for correct intracellular targeting and protein function.

The protein localises to the virion membrane. The protein resides in the host Golgi apparatus. Its subcellular location is the host trans-Golgi network. It localises to the host endoplasmic reticulum membrane. It carries out the reaction a 1,2-diacyl-sn-glycero-3-phosphocholine + H2O = a 1,2-diacyl-sn-glycero-3-phosphate + choline + H(+). Its function is as follows. Major envelope protein that plays a role in the biogenesis of the viral double membrane and in egress of virus from the host cell. Produces the wrapped form of virus that is required for cell-to-cell spread. Acts as a lipase with broad specificity including phospholipase C, phospholipase A, and triacylglycerol lipase activities. The protein is Envelope phospholipase OPG057 (OPG057) of Variola virus (isolate Human/India/Ind3/1967) (VARV).